The chain runs to 322 residues: Mas-related G-protein coupled receptor member X4 (322 aa).

Topologically, residues 1 to 31 (MDPTVPVFGTKLTPINGREETPCYNQTLSFT) are extracellular. Asn25 carries an N-linked (GlcNAc...) asparagine glycan. The chain crosses the membrane as a helical span at residues 32-52 (VLTCIISLVGLTGNAVVLWLL). At 53 to 60 (GYRMRRNA) the chain is on the cytoplasmic side. The chain crosses the membrane as a helical span at residues 61 to 81 (VSIYILNLAAADFLFLSFQII). Residues 82–96 (RLPLRLINISHLIRK) lie on the Extracellular side of the membrane. A glycan (N-linked (GlcNAc...) asparagine) is linked at Asn89. A helical membrane pass occupies residues 97–117 (ILVSVMTFPYFTGLSMLSAIS). The Cytoplasmic portion of the chain corresponds to 118-137 (TERCLSVLWPIWYRCRRPTH). A helical transmembrane segment spans residues 138 to 158 (LSAVVCVLLWGLSLLFSMLEW). At 159–177 (RFCDFLFSGADSSWCETSD) the chain is on the extracellular side. Residues 178–198 (FIPVAWLIFLCVVLCVSSLVL) form a helical membrane-spanning segment. Residues 199–218 (LVRILCGSRKMPLTRLYVTI) are Cytoplasmic-facing. Residues 219–239 (LLTVLVFLLCGLPFGILGALI) form a helical membrane-spanning segment. Residues 240–254 (YRMHLNLEVLYCHVY) lie on the Extracellular side of the membrane. Residues 255 to 275 (LVCMSLSSLNSSANPIIYFFV) traverse the membrane as a helical segment. The Cytoplasmic portion of the chain corresponds to 276–322 (GSFRQRQNRQNLKLVLQRALQDKPEVDKGEGQLPEESLELSGSRLGP). Positions 299-322 (PEVDKGEGQLPEESLELSGSRLGP) are disordered.

Belongs to the G-protein coupled receptor 1 family. Mas subfamily. As to expression, uniquely localized in a subset of small dorsal root and trigeminal sensory neurons.

The protein localises to the cell membrane. Orphan receptor. Probably involved in the function of nociceptive neurons. May regulate nociceptor function and/or development, including the sensation or modulation of pain. Potently activated by enkephalins. This chain is Mas-related G-protein coupled receptor member X4 (MRGPRX4), found in Homo sapiens (Human).